Here is a 305-residue protein sequence, read N- to C-terminus: Methionyl-tRNA formyltransferase (305 aa).

109 to 112 (SLLP) is a (6S)-5,6,7,8-tetrahydrofolate binding site.

It belongs to the Fmt family.

The catalysed reaction is L-methionyl-tRNA(fMet) + (6R)-10-formyltetrahydrofolate = N-formyl-L-methionyl-tRNA(fMet) + (6S)-5,6,7,8-tetrahydrofolate + H(+). Attaches a formyl group to the free amino group of methionyl-tRNA(fMet). The formyl group appears to play a dual role in the initiator identity of N-formylmethionyl-tRNA by promoting its recognition by IF2 and preventing the misappropriation of this tRNA by the elongation apparatus. This is Methionyl-tRNA formyltransferase from Paramagnetospirillum magneticum (strain ATCC 700264 / AMB-1) (Magnetospirillum magneticum).